We begin with the raw amino-acid sequence, 947 residues long: DNA topoisomerase 1 (947 aa).

The Toprim domain maps to 16-140 (RRLVIVESPT…VKRMVFHEIT (125 aa)). Mg(2+) contacts are provided by Glu22 and Asp109. The 460-residue stretch at 155–614 (DIDLVDAQET…FYFGGNHGVS (460 aa)) folds into the Topo IA-type catalytic domain. Residues 189 to 194 (SAGRVQ) form an interaction with DNA region. Tyr343 serves as the catalytic O-(5'-phospho-DNA)-tyrosine intermediate. Disordered stretches follow at residues 733–771 (VLPK…GSLL), 846–888 (KRAG…GETN), and 910–947 (ADRR…QSPR). Residues 915-934 (RGPVKRPAKKARKVPAKKAA) show a composition bias toward basic residues.

Belongs to the type IA topoisomerase family. As to quaternary structure, monomer. Mg(2+) is required as a cofactor.

It carries out the reaction ATP-independent breakage of single-stranded DNA, followed by passage and rejoining.. Releases the supercoiling and torsional tension of DNA, which is introduced during the DNA replication and transcription, by transiently cleaving and rejoining one strand of the DNA duplex. Introduces a single-strand break via transesterification at a target site in duplex DNA. The scissile phosphodiester is attacked by the catalytic tyrosine of the enzyme, resulting in the formation of a DNA-(5'-phosphotyrosyl)-enzyme intermediate and the expulsion of a 3'-OH DNA strand. The free DNA strand then undergoes passage around the unbroken strand, thus removing DNA supercoils. Finally, in the religation step, the DNA 3'-OH attacks the covalent intermediate to expel the active-site tyrosine and restore the DNA phosphodiester backbone. In Mycobacterium leprae (strain TN), this protein is DNA topoisomerase 1.